Reading from the N-terminus, the 352-residue chain is Keratocan (352 aa).

Residues 1–20 (MAGTICFIMWVLFITDTVWS) form the signal peptide. Positions 33–71 (DDWTIHDFECPMECFCPPSFPTALYCENRGLKEIPAIPS) constitute an LRRNT domain. Cystine bridges form between cysteine 42–cysteine 48 and cysteine 46–cysteine 58. LRR repeat units lie at residues 72–93 (RIWYLYLQNNLIETIPEKPFEN), 96–117 (QLRWINLNKNKITNYGIEKGAL), 122–142 (KLLFLFLEDNELEEVPSPLPR), 143–164 (SLEQLQLARNKVSRIPQGTFSN), 167–180 (NLTLLDLQNNKLVD), 193–213 (NLMQLNMAKNALRNMPPRLPA), 214–235 (NTMQLFLDNNSIEGIPENYFNV), 238–258 (KVAFLRLNHNKLSDEGLPSRG), 263–282 (SILDLQLSHNQLTKVPRISA), and 283–304 (HLQHLHLDHNKIKSVNVSVICP). Asparagine 93 carries an N-linked (GlcNAc...) (keratan sulfate) asparagine glycan. The N-linked (GlcNAc...) (keratan sulfate) asparagine glycan is linked to asparagine 167. Asparagine 222 carries N-linked (GlcNAc...) asparagine glycosylation. Asparagine 298 carries N-linked (GlcNAc...) asparagine glycosylation. The cysteines at positions 303 and 343 are disulfide-linked.

Belongs to the small leucine-rich proteoglycan (SLRP) family. SLRP class II subfamily. Post-translationally, binds keratan sulfate chains. As to expression, cornea (at protein level). Increased expression in the stroma of keratoconus corneas. Also detected in trachea, and in low levels, in intestine, skeletal muscle, ovary, lung and putamen.

The protein localises to the secreted. It localises to the extracellular space. Its subcellular location is the extracellular matrix. In terms of biological role, may be important in developing and maintaining corneal transparency and for the structure of the stromal matrix. This is Keratocan (KERA) from Homo sapiens (Human).